The sequence spans 145 residues: Secreted LysM effector Vd2LysM (145 aa).

The N-terminal stretch at 1–18 is a signal peptide; that stretch reads MRPDVFVLFTAFLGPAAA. LysM domains lie at 31 to 75 and 96 to 140; these read GWYI…KIKV and GWYH…DIVV.

Belongs to the secreted LysM effector family. In terms of assembly, forms homodimers in a chitin-independent manner through interactions at the N-termini of EPL2 monomers. Homodimers are further polymerized in a chitin-dependent manner.

Its function is as follows. Secreted effector that enables the plant pathogenic fungus to manipulate host defenses for successful infection. Binds chitin, suppresses chitin-induced immune responses and protects hyphae against degradation by plant hydrolytic enzymes. Chitin-induced polymerization of homodimers forms a contiguous ELP2 highly oligomeric super-complexe that may precipitate at infection sites to eliminate chitin oligomers, and thus suppress the activation of chitin-induced plant immunity. The chain is Secreted LysM effector Vd2LysM from Verticillium dahliae (strain VdLs.17 / ATCC MYA-4575 / FGSC 10137) (Verticillium wilt).